We begin with the raw amino-acid sequence, 161 residues long: Ribosome maturation factor RimP (161 aa).

It belongs to the RimP family.

Its subcellular location is the cytoplasm. Functionally, required for maturation of 30S ribosomal subunits. This chain is Ribosome maturation factor RimP, found in Rickettsia conorii (strain ATCC VR-613 / Malish 7).